The primary structure comprises 280 residues: Ribosomal RNA small subunit methyltransferase A (280 aa).

Residues N28, L30, G55, E77, D103, and N122 each coordinate S-adenosyl-L-methionine.

This sequence belongs to the class I-like SAM-binding methyltransferase superfamily. rRNA adenine N(6)-methyltransferase family. RsmA subfamily.

The protein localises to the cytoplasm. The catalysed reaction is adenosine(1518)/adenosine(1519) in 16S rRNA + 4 S-adenosyl-L-methionine = N(6)-dimethyladenosine(1518)/N(6)-dimethyladenosine(1519) in 16S rRNA + 4 S-adenosyl-L-homocysteine + 4 H(+). Functionally, specifically dimethylates two adjacent adenosines (A1518 and A1519) in the loop of a conserved hairpin near the 3'-end of 16S rRNA in the 30S particle. May play a critical role in biogenesis of 30S subunits. The protein is Ribosomal RNA small subunit methyltransferase A of Dinoroseobacter shibae (strain DSM 16493 / NCIMB 14021 / DFL 12).